The following is a 159-amino-acid chain: SsrA-binding protein (159 aa).

Over residues tyrosine 131–arginine 148 the composition is skewed to basic and acidic residues. The disordered stretch occupies residues tyrosine 131 to alanine 159.

The protein belongs to the SmpB family.

It localises to the cytoplasm. In terms of biological role, required for rescue of stalled ribosomes mediated by trans-translation. Binds to transfer-messenger RNA (tmRNA), required for stable association of tmRNA with ribosomes. tmRNA and SmpB together mimic tRNA shape, replacing the anticodon stem-loop with SmpB. tmRNA is encoded by the ssrA gene; the 2 termini fold to resemble tRNA(Ala) and it encodes a 'tag peptide', a short internal open reading frame. During trans-translation Ala-aminoacylated tmRNA acts like a tRNA, entering the A-site of stalled ribosomes, displacing the stalled mRNA. The ribosome then switches to translate the ORF on the tmRNA; the nascent peptide is terminated with the 'tag peptide' encoded by the tmRNA and targeted for degradation. The ribosome is freed to recommence translation, which seems to be the essential function of trans-translation. This chain is SsrA-binding protein, found in Streptomyces coelicolor (strain ATCC BAA-471 / A3(2) / M145).